The following is a 381-amino-acid chain: MRFLDAGETHGRCLVGIIEGFPANVKINIDNINRLLELRQRGYGRGKRMEIEKDKATILSGVRNSYTTGAPITIMIENRDYVNWQKYMDPILCDTMTKKVTVPRPGHADLPGCLKYGFDDARPVLERASARETAMRVAIGALCEELLNVFGIKLYNHVVEIGGVRIKKEYSTDDVNLFEEAENSDLFCIDKEAENDMKQVIDSAKEAGDSVGGVAEVICKNVPFGLGSHVHWDRKLDGLLAQAVMSIQSVKGVEIGMGFEVSRRFGSEVHDEIFYDDQKGFYRKTNNAGGIEGGISNGMDIVIRAAFKPIPTLYKPLRSVDLQGLKEKEAAVERSDTCAVPAGSVVMRAAVAYVLANSLIDRLSGDSLDIMIDNYKRLYQK.

NADP(+)-binding residues include R39 and R45. FMN is bound by residues 127–129 (RAS), 248–249 (QS), G293, 308–312 (KPIPT), and R334.

This sequence belongs to the chorismate synthase family. In terms of assembly, homotetramer. Requires FMNH2 as cofactor.

The enzyme catalyses 5-O-(1-carboxyvinyl)-3-phosphoshikimate = chorismate + phosphate. It functions in the pathway metabolic intermediate biosynthesis; chorismate biosynthesis; chorismate from D-erythrose 4-phosphate and phosphoenolpyruvate: step 7/7. Its function is as follows. Catalyzes the anti-1,4-elimination of the C-3 phosphate and the C-6 proR hydrogen from 5-enolpyruvylshikimate-3-phosphate (EPSP) to yield chorismate, which is the branch point compound that serves as the starting substrate for the three terminal pathways of aromatic amino acid biosynthesis. This reaction introduces a second double bond into the aromatic ring system. The chain is Chorismate synthase from Caldicellulosiruptor saccharolyticus (strain ATCC 43494 / DSM 8903 / Tp8T 6331).